A 435-amino-acid chain; its full sequence is Uracil permease (435 aa).

12 helical membrane-spanning segments follow: residues 17–37 (FSWV…TILV), 42–62 (GMSP…YLLI), 67–87 (IPAY…VKAT), 91–111 (GAAM…ALLI), 122–142 (ILPP…LAST), 161–181 (LKHF…AIFL), 191–213 (LIGI…QPVL), 234–254 (VTLG…SEHI), 311–331 (VFSV…GFIG), 336–356 (LISS…FGII), 376–396 (NLII…IQVS), and 399–419 (GFQV…NLIL).

The protein belongs to the nucleobase:cation symporter-2 (NCS2) (TC 2.A.40) family.

It is found in the cell membrane. Functionally, transport of uracil in the cell. This Bacillus subtilis (strain 168) protein is Uracil permease (pyrP).